Consider the following 337-residue polypeptide: MADFWGGYLWPAIIIVLQCLAIILPMLGAIAYLTYAERKVIGAMQMRKGPNVVGPFGLLQPLADGVKLFLKETIIPTGANRAVFIIAPLMTFILALIAWAVIPFDAGWVVADINVGVLYLFAVSGLGVYGIIMAGWASNSKYAFLGGLRSAAQMVSYEVAMGLIIIAVILSAGSMNLSDIVEAQRQGVWYFIPHFPMFVMFLVSILAETNRAPFDLPEAEAELVSGYNVEYSAMPFALFFLGEYGNMILMSGITAILFLGGWLPPVDIAPFNWIPGIIWFFLKIALILFVFLWVRATFPRYRYDQLMRLGWKVFLPGSLIWVVLTAGFLVTFDMLPR.

A run of 8 helical transmembrane segments spans residues 13–33 (IIIV…IAYL), 82–102 (AVFI…WAVI), 115–135 (VGVL…IMAG), 154–174 (MVSY…SAGS), 187–207 (GVWY…SILA), 248–268 (ILMS…PVDI), 274–294 (IPGI…FLWV), and 313–333 (VFLP…VTFD).

Belongs to the complex I subunit 1 family. As to quaternary structure, NDH-1 is composed of 14 different subunits. Subunits NuoA, H, J, K, L, M, N constitute the membrane sector of the complex.

The protein localises to the cell inner membrane. It catalyses the reaction a quinone + NADH + 5 H(+)(in) = a quinol + NAD(+) + 4 H(+)(out). In terms of biological role, NDH-1 shuttles electrons from NADH, via FMN and iron-sulfur (Fe-S) centers, to quinones in the respiratory chain. The immediate electron acceptor for the enzyme in this species is believed to be ubiquinone. Couples the redox reaction to proton translocation (for every two electrons transferred, four hydrogen ions are translocated across the cytoplasmic membrane), and thus conserves the redox energy in a proton gradient. This subunit may bind ubiquinone. The polypeptide is NADH-quinone oxidoreductase subunit H (Rhodospirillum rubrum (strain ATCC 11170 / ATH 1.1.1 / DSM 467 / LMG 4362 / NCIMB 8255 / S1)).